Consider the following 346-residue polypeptide: Phosphoribosylformylglycinamidine cyclo-ligase (346 aa).

This sequence belongs to the AIR synthase family.

The protein resides in the cytoplasm. It catalyses the reaction 2-formamido-N(1)-(5-O-phospho-beta-D-ribosyl)acetamidine + ATP = 5-amino-1-(5-phospho-beta-D-ribosyl)imidazole + ADP + phosphate + H(+). Its pathway is purine metabolism; IMP biosynthesis via de novo pathway; 5-amino-1-(5-phospho-D-ribosyl)imidazole from N(2)-formyl-N(1)-(5-phospho-D-ribosyl)glycinamide: step 2/2. In Prochlorococcus marinus (strain NATL2A), this protein is Phosphoribosylformylglycinamidine cyclo-ligase.